The primary structure comprises 427 residues: Gamma-glutamyl phosphate reductase (427 aa).

The protein belongs to the gamma-glutamyl phosphate reductase family.

It is found in the cytoplasm. It catalyses the reaction L-glutamate 5-semialdehyde + phosphate + NADP(+) = L-glutamyl 5-phosphate + NADPH + H(+). It participates in amino-acid biosynthesis; L-proline biosynthesis; L-glutamate 5-semialdehyde from L-glutamate: step 2/2. In terms of biological role, catalyzes the NADPH-dependent reduction of L-glutamate 5-phosphate into L-glutamate 5-semialdehyde and phosphate. The product spontaneously undergoes cyclization to form 1-pyrroline-5-carboxylate. The protein is Gamma-glutamyl phosphate reductase of Rhizobium meliloti (strain 1021) (Ensifer meliloti).